Reading from the N-terminus, the 621-residue chain is MEFPGGNDNYLTITGPSHPFLSGAETFHTPSLGDEEFEIPPISLDSDPSLAVSDVVGHFDDLADPSSSQDGSFSAQYGVQTLDMPVGMTHGLMEQGGGLLSGGLTMDLDHSIGTQYSANPPVTIDVPMTDMTSGLMGHSQLTTIDQSELSSQLGLSLGGGTILPPAQSPEDRLSTTPSPTSSLHEDGVEDFRRQLPSQKTVVVEAGKKQKAPKKRKKKDPNEPQKPVSAYALFFRDTQAAIKGQNPNATFGEVSKIVASMWDSLGEEQKQVYKRKTEAAKKEYLKALAAYKDNQECQATVETVELDPAPPSQTPSPPPMATVDPASPAPASIEPPALSPSIVVNSTLSSYVANQASSGAGGQPNITKLIITKQMLPSSITMSQGGMVTVIPATVVTSRGLQLGQTSTATIQPSQQAQIVTRSVLQAAAAAAAAASMQLPPPRLQPPPLQQMPQPPTQQQVTILQQPPPLQAMQQPPPQKVRINLQQQPPPLQIKSVPLPTLKMQTTLVPPTVESSPERPMNNSPEAHTVEATSPETICEMITDVVPEVESPSQMDVELVSGSPVALSPQPRCVRSGCENPPIVSKDWDNEYCSNECVVKHCRDVFLAWVASRNSNTVVFVK.

Disordered stretches follow at residues 153–227 and 305–333; these read LGLS…QKPV and LDPA…ASIE. Residue threonine 176 is modified to Phosphothreonine. Residues serine 178, serine 181, and serine 182 each carry the phosphoserine modification. Over residues 183–193 the composition is skewed to basic and acidic residues; that stretch reads LHEDGVEDFRR. The segment covering 208 to 218 has biased composition (basic residues); the sequence is KQKAPKKRKKK. Residues 213-218 carry the Nuclear localization signal motif; the sequence is KKRKKK. Positions 223 to 291 form a DNA-binding region, HMG box; sequence PQKPVSAYAL…EYLKALAAYK (69 aa). Over residues 307 to 319 the composition is skewed to pro residues; sequence PAPPSQTPSPPPM. At threonine 313 the chain carries Phosphothreonine. Serine 315 carries the post-translational modification Phosphoserine. A compositionally biased stretch (low complexity) spans 320-333; sequence ATVDPASPAPASIE. Arginine 481 is modified (asymmetric dimethylarginine). A disordered region spans residues 510–529; the sequence is PTVESSPERPMNNSPEAHTV. Phosphoserine occurs at positions 533, 550, 552, 560, 562, and 567.

Component of the PNUTS-PP1 phosphatase complex, composed of PPP1R10/PNUTS, TOX4, WDR82 and PPP1CA or PPP1CB or PPP1CC. Interacts with PPP1R10/PNUTS. Interacts with FOXO1 and CREB1 (increased by cAMP); FOXO1 and CREB1 are required for full induction of TOX4-dependent activity and the interactions are inhibited by insulin.

Its subcellular location is the nucleus. It localises to the chromosome. Its activity is regulated as follows. In liver, recruited to target gene promoters following treatment with dexamethasone and cAMP. Binding is decreased in presence of insulin. Functionally, transcription factor that modulates cell fate reprogramming from the somatic state to the pluripotent and neuronal fate. In liver, controls the expression of hormone-regulated gluconeogenic genes such as G6PC1 and PCK1. This regulation is independent of the insulin receptor activation. Also acts as a regulatory component of protein phosphatase 1 (PP1) complexes. Component of the PNUTS-PP1 protein phosphatase complex, a PP1 complex that regulates RNA polymerase II transcription pause-release. PNUTS-PP1 also plays a role in the control of chromatin structure and cell cycle progression during the transition from mitosis into interphase. In Pongo abelii (Sumatran orangutan), this protein is TOX high mobility group box family member 4 (TOX4).